The following is a 127-amino-acid chain: Fluoride-specific ion channel FluC (127 aa).

2 consecutive transmembrane segments (helical) span residues 4–24 (WFWI…LSTW) and 36–56 (GTLA…EIAA). Residues Gly75 and Thr78 each coordinate Na(+). The chain crosses the membrane as a helical span at residues 100–120 (LANIAITLVVCLLAGVLGMVV).

This sequence belongs to the fluoride channel Fluc/FEX (TC 1.A.43) family.

It is found in the cell inner membrane. It catalyses the reaction fluoride(in) = fluoride(out). Na(+) is not transported, but it plays an essential structural role and its presence is essential for fluoride channel function. Functionally, fluoride-specific ion channel. Important for reducing fluoride concentration in the cell, thus reducing its toxicity. This Sorangium cellulosum (strain So ce56) (Polyangium cellulosum (strain So ce56)) protein is Fluoride-specific ion channel FluC.